The chain runs to 154 residues: Keratin-associated protein 9-4 (154 aa).

15 consecutive repeat copies span residues 8–12 (CCQPT), 13–17 (CCRTT), 18–22 (CCRTT), 37–41 (CCQPS), 42–46 (CCVSS), 51–55 (CCRPT), 56–60 (CCQNT), 61–65 (CCQPT), 70–74 (CCQPS), 75–79 (CCSTP), 80–84 (CCQPT), 85–89 (CCGSS), 129–133 (CCRPA), 134–138 (CCETT), and 148–152 (CCQPF). The tract at residues 8 to 152 (CCQPTCCRTT…TCVSSCCQPF (145 aa)) is 15 X 5 AA repeats of C-C-[RQVGE]-[SPTN]-[TASPF].

This sequence belongs to the KRTAP type 9 family. In terms of assembly, interacts with hair keratins.

Its function is as follows. In the hair cortex, hair keratin intermediate filaments are embedded in an interfilamentous matrix, consisting of hair keratin-associated proteins (KRTAP), which are essential for the formation of a rigid and resistant hair shaft through their extensive disulfide bond cross-linking with abundant cysteine residues of hair keratins. The matrix proteins include the high-sulfur and high-glycine-tyrosine keratins. The polypeptide is Keratin-associated protein 9-4 (KRTAP9-4) (Homo sapiens (Human)).